The sequence spans 110 residues: Multidrug transporter PA4990 (110 aa).

The next 4 membrane-spanning stretches (helical) occupy residues 7-27, 31-51, 58-78, and 85-105; these read LAIA…VAGF, LPLL…VLVM, VVYA…AMFV, and PAAL…QLFS.

Belongs to the drug/metabolite transporter (DMT) superfamily. Small multidrug resistance (SMR) (TC 2.A.7.1) family.

It localises to the cell membrane. Its function is as follows. Confers resistance to ethidium bromide, acriflavine and methyl viologen. The chain is Multidrug transporter PA4990 from Pseudomonas aeruginosa (strain ATCC 15692 / DSM 22644 / CIP 104116 / JCM 14847 / LMG 12228 / 1C / PRS 101 / PAO1).